A 127-amino-acid chain; its full sequence is Protein FAM229A (127 aa).

Positions 1–96 (MLPSSTPGPG…ATEHNPVRPL (96 aa)) are disordered. Positions 24–39 (RSPAARAPAAASSLGP) are enriched in low complexity.

Belongs to the FAM229 family.

In Homo sapiens (Human), this protein is Protein FAM229A (FAM229A).